We begin with the raw amino-acid sequence, 346 residues long: S-adenosylmethionine:tRNA ribosyltransferase-isomerase (346 aa).

The protein belongs to the QueA family. In terms of assembly, monomer.

The protein resides in the cytoplasm. The enzyme catalyses 7-aminomethyl-7-carbaguanosine(34) in tRNA + S-adenosyl-L-methionine = epoxyqueuosine(34) in tRNA + adenine + L-methionine + 2 H(+). It participates in tRNA modification; tRNA-queuosine biosynthesis. In terms of biological role, transfers and isomerizes the ribose moiety from AdoMet to the 7-aminomethyl group of 7-deazaguanine (preQ1-tRNA) to give epoxyqueuosine (oQ-tRNA). The sequence is that of S-adenosylmethionine:tRNA ribosyltransferase-isomerase from Neisseria gonorrhoeae (strain ATCC 700825 / FA 1090).